Reading from the N-terminus, the 209-residue chain is Peroxiredoxin (209 aa).

Residues 2–156 enclose the Thioredoxin domain; the sequence is PLIGDKFPEM…IVRMIRAFRV (155 aa). Residue cysteine 44 is the Cysteine sulfenic acid (-SOH) intermediate of the active site. Arginine 119 serves as a coordination point for substrate. Cysteine 198 and cysteine 204 are joined by a disulfide.

It belongs to the peroxiredoxin family. Prx6 subfamily. As to quaternary structure, homodecamer. Pentamer of dimers that assemble into a ring structure.

Its subcellular location is the cytoplasm. The catalysed reaction is a hydroperoxide + [thioredoxin]-dithiol = an alcohol + [thioredoxin]-disulfide + H2O. Functionally, thiol-specific peroxidase that catalyzes the reduction of hydrogen peroxide and organic hydroperoxides to water and alcohols, respectively. Plays a role in cell protection against oxidative stress by detoxifying peroxides. This Methanothermobacter thermautotrophicus (strain ATCC 29096 / DSM 1053 / JCM 10044 / NBRC 100330 / Delta H) (Methanobacterium thermoautotrophicum) protein is Peroxiredoxin.